Consider the following 558-residue polypeptide: Formate--tetrahydrofolate ligase (558 aa).

66 to 73 (TPAGEGKT) is a binding site for ATP.

This sequence belongs to the formate--tetrahydrofolate ligase family.

It carries out the reaction (6S)-5,6,7,8-tetrahydrofolate + formate + ATP = (6R)-10-formyltetrahydrofolate + ADP + phosphate. It participates in one-carbon metabolism; tetrahydrofolate interconversion. The sequence is that of Formate--tetrahydrofolate ligase from Clostridioides difficile (strain 630) (Peptoclostridium difficile).